The chain runs to 237 residues: MFARGLKRKYGDQEEGVEGFGTVPSYSLQRQSLLDMSLVKLQLCHMLVEPNLCRSVLIANTVRQIQEEMSQDGVWHGMAPQNVDRAPVERLVSTEILCRTVRGAEEEHPAPELEDAPLQNSVSELPIVGSAPGQRNPQSSLWEMDSPQENRGSFQKSLDQIFETLENKNSSSVEELFSDVDSSYYDLDTVLTGMMSGTKSSLCNGLEGFAAATPPPSSTCKSDLAELDHVVEILVET.

In terms of domain architecture, SERTA spans 26-73 (YSLQRQSLLDMSLVKLQLCHMLVEPNLCRSVLIANTVRQIQEEMSQDG).

Expressed preferentially in hematopoietic progenitors and mature blood cells. Expressed at low levels in the heart, lung, spleen, and thymus and at a higher level in muscle.

It localises to the nucleus. In terms of biological role, may participate in the regulation of cell proliferation through the E2F/RB pathway. May be involved in molecular regulation of hematopoietic stem cells and progenitor cell lineage commitment and differentiation. The chain is Cell division cycle-associated protein 4 (Cdca4) from Mus musculus (Mouse).